The primary structure comprises 75 residues: UPF0270 protein PSPPH_1506 (75 aa).

The protein belongs to the UPF0270 family.

In Pseudomonas savastanoi pv. phaseolicola (strain 1448A / Race 6) (Pseudomonas syringae pv. phaseolicola (strain 1448A / Race 6)), this protein is UPF0270 protein PSPPH_1506.